The sequence spans 441 residues: Dihydroorotase (441 aa).

Residues His-77 and His-79 each coordinate Zn(2+). Substrate is bound by residues 79–81 (HFR) and Asn-111. Residues Asp-167, His-194, and His-248 each contribute to the Zn(2+) site. Asn-294 is a substrate binding site. Asp-321 contributes to the Zn(2+) binding site. Asp-321 is an active-site residue. Substrate-binding positions include His-325 and 339 to 340 (FG).

It belongs to the metallo-dependent hydrolases superfamily. DHOase family. Class I DHOase subfamily. Requires Zn(2+) as cofactor.

The catalysed reaction is (S)-dihydroorotate + H2O = N-carbamoyl-L-aspartate + H(+). It participates in pyrimidine metabolism; UMP biosynthesis via de novo pathway; (S)-dihydroorotate from bicarbonate: step 3/3. Catalyzes the reversible cyclization of carbamoyl aspartate to dihydroorotate. This Wolbachia sp. subsp. Drosophila simulans (strain wRi) protein is Dihydroorotase.